We begin with the raw amino-acid sequence, 320 residues long: Ferrochelatase (320 aa).

Fe cation-binding residues include H194 and E275.

Belongs to the ferrochelatase family. Monomer.

It localises to the cytoplasm. The enzyme catalyses heme b + 2 H(+) = protoporphyrin IX + Fe(2+). It participates in porphyrin-containing compound metabolism; protoheme biosynthesis; protoheme from protoporphyrin-IX: step 1/1. In terms of biological role, catalyzes the ferrous insertion into protoporphyrin IX. This is Ferrochelatase from Escherichia coli (strain SMS-3-5 / SECEC).